A 73-amino-acid chain; its full sequence is Large ribosomal subunit protein bL31 (73 aa).

This sequence belongs to the bacterial ribosomal protein bL31 family. Type A subfamily. As to quaternary structure, part of the 50S ribosomal subunit.

Binds the 23S rRNA. This is Large ribosomal subunit protein bL31 from Sinorhizobium fredii (strain NBRC 101917 / NGR234).